The following is a 242-amino-acid chain: Sec-independent protein translocase protein TatCd (242 aa).

3 helical membrane-spanning segments follow: residues 19 to 39, 60 to 80, and 107 to 127; these read IIVT…FVQD, ILWV…IPVA, and LFAL…PIVL. The tract at residues 128–149 is interaction with TatAd; it reads SFLTHLSSGHFETMFTADRYFR. A helical membrane pass occupies residues 150 to 170; sequence FMVNLSLPFGFLFEMPLVVMF. The interaction with TatAd stretch occupies residues 171–187; that stretch reads LTRLGILNPYRLAKARK. 2 helical membrane passes run 188-208 and 209-229; these read LSYF…FISD and FLVM…SAFV.

The protein belongs to the TatC family. As to quaternary structure, forms a complex with TatAd. Two types of complexes exist: one composed of TatAd and TatCd, and another composed only of TatAd.

It is found in the cell membrane. Part of the twin-arginine translocation (Tat) system that transports large folded proteins containing a characteristic twin-arginine motif in their signal peptide across membranes. Required for PhoD secretion. TatCd promotes membrane localization of TatAd via domain specific interactions. TatCd is required for stabile production of TatAd as well as for its maintenance. The chain is Sec-independent protein translocase protein TatCd from Bacillus subtilis (strain 168).